The primary structure comprises 460 residues: Kynurenine 3-monooxygenase (460 aa).

The protein belongs to the aromatic-ring hydroxylase family. KMO subfamily. FAD is required as a cofactor.

It is found in the mitochondrion. The catalysed reaction is L-kynurenine + NADPH + O2 + H(+) = 3-hydroxy-L-kynurenine + NADP(+) + H2O. It participates in cofactor biosynthesis; NAD(+) biosynthesis; quinolinate from L-kynurenine: step 1/3. Functionally, catalyzes the hydroxylation of L-kynurenine (L-Kyn) to form 3-hydroxy-L-kynurenine (L-3OHKyn). Required for synthesis of quinolinic acid. The chain is Kynurenine 3-monooxygenase from Dictyostelium discoideum (Social amoeba).